A 469-amino-acid polypeptide reads, in one-letter code: GTPase Der (469 aa).

EngA-type G domains follow at residues proline 30–alanine 193 and arginine 203–aspartate 376. GTP-binding positions include glycine 36–serine 43, aspartate 83–tryptophan 87, asparagine 145–aspartate 148, glycine 209–serine 216, aspartate 256–leucine 260, and asparagine 321–aspartate 324. Residues threonine 377 to glutamate 459 form the KH-like domain.

The protein belongs to the TRAFAC class TrmE-Era-EngA-EngB-Septin-like GTPase superfamily. EngA (Der) GTPase family. Associates with the 50S ribosomal subunit.

GTPase that plays an essential role in the late steps of ribosome biogenesis. This is GTPase Der from Mycobacterium marinum (strain ATCC BAA-535 / M).